A 278-amino-acid chain; its full sequence is Orotidine 5'-phosphate decarboxylase (278 aa).

K95 (proton donor) is an active-site residue.

Belongs to the OMP decarboxylase family. Type 2 subfamily.

It catalyses the reaction orotidine 5'-phosphate + H(+) = UMP + CO2. Its pathway is pyrimidine metabolism; UMP biosynthesis via de novo pathway; UMP from orotate: step 2/2. In Mycobacterium marinum (strain ATCC BAA-535 / M), this protein is Orotidine 5'-phosphate decarboxylase.